The primary structure comprises 492 residues: MKKAILSVSNKSGIVEFAKALTNLDYELYSTGGTKRVLEDANINIKSVSELTQFPEIMDGRVKTLHPAVHGGILADRDKEHHLEQLREQHIDLIDMVVVNLYPFQQTVAQPDVTETDAVENIDIGGPTMLRAAAKNFKHVTTIVHPSDYNEVIERIKNHQLDEAYRKSLMVKVFQHTNEYDHAIVNYFKDNKETLRYGENPQQSAYFVRTSDSKHTIAGAKQLHGKQLSFNNIKDADAALSLVKKFNEPTAVAVKHMNPCGVGIGQSIDEAFQHAYEADNQSIFGGIIALNRTVDVKLAEALHSIFLEVVIAPQFTEEALKILTQKKNIRLLQIDMTIDNAEQEFVSVSGGYLVQDKDNKDVTRNDMTVATDTQPTEAQWEAMLLGWKVVSAVKSNAVILSNNKQTVGIGAGQMNRVGSAKIAIERAIEINDNVALVSDGFFPMGDTVEYAAEHGIKAIIQPGGSIKDQDSIDMANKYGITMVMTGMRHFKH.

The region spanning 1–144 (MKKAILSVSN…KNFKHVTTIV (144 aa)) is the MGS-like domain.

Belongs to the PurH family.

It catalyses the reaction (6R)-10-formyltetrahydrofolate + 5-amino-1-(5-phospho-beta-D-ribosyl)imidazole-4-carboxamide = 5-formamido-1-(5-phospho-D-ribosyl)imidazole-4-carboxamide + (6S)-5,6,7,8-tetrahydrofolate. The enzyme catalyses IMP + H2O = 5-formamido-1-(5-phospho-D-ribosyl)imidazole-4-carboxamide. Its pathway is purine metabolism; IMP biosynthesis via de novo pathway; 5-formamido-1-(5-phospho-D-ribosyl)imidazole-4-carboxamide from 5-amino-1-(5-phospho-D-ribosyl)imidazole-4-carboxamide (10-formyl THF route): step 1/1. It functions in the pathway purine metabolism; IMP biosynthesis via de novo pathway; IMP from 5-formamido-1-(5-phospho-D-ribosyl)imidazole-4-carboxamide: step 1/1. The chain is Bifunctional purine biosynthesis protein PurH from Staphylococcus epidermidis (strain ATCC 35984 / DSM 28319 / BCRC 17069 / CCUG 31568 / BM 3577 / RP62A).